A 71-amino-acid polypeptide reads, in one-letter code: Exodeoxyribonuclease 7 small subunit (71 aa).

It belongs to the XseB family. As to quaternary structure, heterooligomer composed of large and small subunits.

The protein resides in the cytoplasm. It carries out the reaction Exonucleolytic cleavage in either 5'- to 3'- or 3'- to 5'-direction to yield nucleoside 5'-phosphates.. In terms of biological role, bidirectionally degrades single-stranded DNA into large acid-insoluble oligonucleotides, which are then degraded further into small acid-soluble oligonucleotides. This is Exodeoxyribonuclease 7 small subunit from Clostridium botulinum (strain 657 / Type Ba4).